We begin with the raw amino-acid sequence, 326 residues long: Alkanal monooxygenase beta chain (326 aa).

The protein belongs to the bacterial luciferase oxidoreductase family. As to quaternary structure, heterodimer of an alpha and a beta chain.

It catalyses the reaction a long-chain fatty aldehyde + FMNH2 + O2 = a long-chain fatty acid + hnu + FMN + H2O + 2 H(+). Its function is as follows. Light-emitting reaction in luminous bacteria. The specific role of the beta subunit is unknown, but it is absolutely required for bioluminescence activity. This chain is Alkanal monooxygenase beta chain (luxB), found in Aliivibrio fischeri (Vibrio fischeri).